The primary structure comprises 262 residues: 1-(5-phosphoribosyl)-5-[(5-phosphoribosylamino)methylideneamino] imidazole-4-carboxamide isomerase (262 aa).

Residue aspartate 8 is the Proton acceptor of the active site. Aspartate 129 functions as the Proton donor in the catalytic mechanism. Residues 243 to 262 (KDNVGQEDHSLPRCEPGPRG) form a disordered region.

The protein belongs to the HisA/HisF family.

The protein localises to the cytoplasm. The catalysed reaction is 1-(5-phospho-beta-D-ribosyl)-5-[(5-phospho-beta-D-ribosylamino)methylideneamino]imidazole-4-carboxamide = 5-[(5-phospho-1-deoxy-D-ribulos-1-ylimino)methylamino]-1-(5-phospho-beta-D-ribosyl)imidazole-4-carboxamide. It participates in amino-acid biosynthesis; L-histidine biosynthesis; L-histidine from 5-phospho-alpha-D-ribose 1-diphosphate: step 4/9. This is 1-(5-phosphoribosyl)-5-[(5-phosphoribosylamino)methylideneamino] imidazole-4-carboxamide isomerase from Desulforudis audaxviator (strain MP104C).